A 427-amino-acid polypeptide reads, in one-letter code: MTRSEELFKEALKVIPGGVNSPVRAFGSVGESPRFIKRAEGAHLYDVDGKEYIDYICSWGPMILGHNHPDILESVVQACQNGLSFGAVTEMEVKMAKLICELVPSIEMVRMVNSGTEAVMSAIRVARGYTGRNKIIKFNGCYHGHSDGLLVKAGSGVMTAGVPDSLGVPKGCTEDTLTANYNDITGVQELFNQYRSDIAAVIVEPVAANMGVVLPKEGFLHGLRKLCNENGTVLIFDEVITGFRLGIDGAQGYYGVTPDLTTYGKIIGAGMPVGAYGGRKEIMEVVAPLGAVYQAGTLSGNPVAMTAGYTQLTILKENPDYYTKLNQMGELLFGDIEMKFRRAGIPFQMNHVGSLGSLFFAKEEVYDYQSAKASDTEQYKAYFKYMLNKGIYLAPAQFEAMFLSVAHGEEEIKQTLDTMDGFLESVR.

K265 bears the N6-(pyridoxal phosphate)lysine mark.

Belongs to the class-III pyridoxal-phosphate-dependent aminotransferase family. HemL subfamily. Homodimer. It depends on pyridoxal 5'-phosphate as a cofactor.

It localises to the cytoplasm. It catalyses the reaction (S)-4-amino-5-oxopentanoate = 5-aminolevulinate. Its pathway is porphyrin-containing compound metabolism; protoporphyrin-IX biosynthesis; 5-aminolevulinate from L-glutamyl-tRNA(Glu): step 2/2. The protein is Glutamate-1-semialdehyde 2,1-aminomutase 1 of Lachnoclostridium phytofermentans (strain ATCC 700394 / DSM 18823 / ISDg) (Clostridium phytofermentans).